Consider the following 33-residue polypeptide: Cysteine-rich venom protein (33 aa).

The interval 1–33 (NVDFNSESTRRKKKQKEIVDLHNSLRRRVSPTA) is disordered. Basic residues predominate over residues 24–33 (SLRRRVSPTA).

It belongs to the CRISP family. In terms of processing, contains 8 disulfide bonds. As to expression, expressed by the venom gland.

It is found in the secreted. Its function is as follows. Blocks contraction of smooth muscle elicited by high potassium-induced depolarization, but does not block caffeine-stimulated contraction. May target voltage-gated calcium channels on smooth muscle (Cav). This Naja naja (Indian cobra) protein is Cysteine-rich venom protein.